A 427-amino-acid chain; its full sequence is Adenylosuccinate synthetase (427 aa).

GTP contacts are provided by residues 12–18 and 40–42; these read GDEGKGK and GHT. The Proton acceptor role is filled by D13. Mg(2+) is bound by residues D13 and G40. IMP contacts are provided by residues 13–16, 38–41, T127, R141, Q222, T237, and R301; these read DEGK and NAGH. H41 serves as the catalytic Proton donor. Substrate is bound at residue 297-303; the sequence is VVTKRPR. Residues R303, 329 to 331, and 411 to 413 each bind GTP; these read SLD and AVG.

The protein belongs to the adenylosuccinate synthetase family. In terms of assembly, homodimer. Mg(2+) is required as a cofactor.

It is found in the cytoplasm. It carries out the reaction IMP + L-aspartate + GTP = N(6)-(1,2-dicarboxyethyl)-AMP + GDP + phosphate + 2 H(+). It participates in purine metabolism; AMP biosynthesis via de novo pathway; AMP from IMP: step 1/2. Plays an important role in the de novo pathway of purine nucleotide biosynthesis. Catalyzes the first committed step in the biosynthesis of AMP from IMP. The sequence is that of Adenylosuccinate synthetase from Leuconostoc mesenteroides subsp. mesenteroides (strain ATCC 8293 / DSM 20343 / BCRC 11652 / CCM 1803 / JCM 6124 / NCDO 523 / NBRC 100496 / NCIMB 8023 / NCTC 12954 / NRRL B-1118 / 37Y).